Here is a 257-residue protein sequence, read N- to C-terminus: UPF0246 protein Shewmr4_2963 (257 aa).

The protein belongs to the UPF0246 family.

The protein is UPF0246 protein Shewmr4_2963 of Shewanella sp. (strain MR-4).